A 338-amino-acid polypeptide reads, in one-letter code: Glycerol-3-phosphate dehydrogenase [NAD(P)+] (338 aa).

NADPH-binding residues include serine 14, tyrosine 15, histidine 35, and lysine 109. Sn-glycerol 3-phosphate is bound by residues lysine 109, glycine 138, and threonine 140. NADPH is bound at residue alanine 142. Residues lysine 194, aspartate 247, serine 257, arginine 258, and asparagine 259 each contribute to the sn-glycerol 3-phosphate site. Lysine 194 functions as the Proton acceptor in the catalytic mechanism. Position 258 (arginine 258) interacts with NADPH. NADPH contacts are provided by valine 282 and glutamate 284.

It belongs to the NAD-dependent glycerol-3-phosphate dehydrogenase family.

It is found in the cytoplasm. It catalyses the reaction sn-glycerol 3-phosphate + NAD(+) = dihydroxyacetone phosphate + NADH + H(+). The enzyme catalyses sn-glycerol 3-phosphate + NADP(+) = dihydroxyacetone phosphate + NADPH + H(+). It participates in membrane lipid metabolism; glycerophospholipid metabolism. Functionally, catalyzes the reduction of the glycolytic intermediate dihydroxyacetone phosphate (DHAP) to sn-glycerol 3-phosphate (G3P), the key precursor for phospholipid synthesis. The chain is Glycerol-3-phosphate dehydrogenase [NAD(P)+] from Shewanella baltica (strain OS155 / ATCC BAA-1091).